Reading from the N-terminus, the 808-residue chain is PH domain-containing protein DDB_G0275795 (808 aa).

Positions 57–121 (ENLEILKEIK…RNRQASQQEL (65 aa)) form a coiled coil. Residues 108–120 (ESTTRNRQASQQE) are compositionally biased toward polar residues. 6 disordered regions span residues 108-127 (ESTT…PPIL), 228-325 (GANA…QDEE), 339-375 (EKLK…QLQS), 405-475 (QQQQ…NGSN), 523-542 (DQTK…ELKK), and 645-675 (KGGG…SNTD). The region spanning 124-216 (PPILSGYLKK…WTEGLKEFKK (93 aa)) is the PH domain. Residues 228-248 (GANANGNGNSSPNMSSSGSYS) are compositionally biased toward low complexity. The span at 255 to 274 (ESSQQPLNSSTGAINTTPQR) shows a compositional bias: polar residues. The segment covering 293–321 (SHSSSSTAPDSPTLSSSYVPPPSSSNLNP) has biased composition (low complexity). A coiled-coil region spans residues 322–412 (QDEELKRREN…QQQQQQQQQQ (91 aa)). Over residues 339-353 (EKLKQQDDQQQDDKQ) the composition is skewed to basic and acidic residues. 2 stretches are compositionally biased toward low complexity: residues 354–375 (QQQQ…QLQS) and 405–414 (QQQQQQQQPP). Over residues 417 to 428 (SPQNSRHGSTNY) the composition is skewed to polar residues. A compositionally biased stretch (low complexity) spans 429-449 (SQLQQQQQQPQQQPQQQSSPQ). Residues 450–475 (VIISNNNSPRFESQQQQNNFHNNGSN) are compositionally biased toward polar residues. A coiled-coil region spans residues 487-645 (DELNKKFLKE…DKYINELLEK (159 aa)). A compositionally biased stretch (basic and acidic residues) spans 525–542 (TKTDAEEKQNKSSNELKK). Positions 654 to 673 (NSNNNNNSNNNNNNSNNNSN) are enriched in low complexity. A coiled-coil region spans residues 678–734 (KESMVAHQTQNAFLLQEIQRLETQSQFKLDIKIQQIEELENQLEQQLYQFHRFREAI).

The sequence is that of PH domain-containing protein DDB_G0275795 from Dictyostelium discoideum (Social amoeba).